The following is a 546-amino-acid chain: CTP synthase (546 aa).

Residues 1–265 (MTKYIFVTGG…DDIIAEQLQL (265 aa)) form an amidoligase domain region. Residue S13 coordinates CTP. S13 serves as a coordination point for UTP. Residues 14–19 (SLGKGI) and D71 contribute to the ATP site. 2 residues coordinate Mg(2+): D71 and E139. Residues 146 to 148 (DIE), 186 to 191 (KTKPTQ), and K222 each bind CTP. UTP contacts are provided by residues 186–191 (KTKPTQ) and K222. Positions 290–542 (KIAMVGKYVD…VKAALAHQAD (253 aa)) constitute a Glutamine amidotransferase type-1 domain. G351 is a binding site for L-glutamine. The Nucleophile; for glutamine hydrolysis role is filled by C378. L-glutamine contacts are provided by residues 379 to 382 (LGMQ), E402, and R469. Residues H515 and E517 contribute to the active site.

This sequence belongs to the CTP synthase family. As to quaternary structure, homotetramer.

It catalyses the reaction UTP + L-glutamine + ATP + H2O = CTP + L-glutamate + ADP + phosphate + 2 H(+). The enzyme catalyses L-glutamine + H2O = L-glutamate + NH4(+). The catalysed reaction is UTP + NH4(+) + ATP = CTP + ADP + phosphate + 2 H(+). The protein operates within pyrimidine metabolism; CTP biosynthesis via de novo pathway; CTP from UDP: step 2/2. With respect to regulation, allosterically activated by GTP, when glutamine is the substrate; GTP has no effect on the reaction when ammonia is the substrate. The allosteric effector GTP functions by stabilizing the protein conformation that binds the tetrahedral intermediate(s) formed during glutamine hydrolysis. Inhibited by the product CTP, via allosteric rather than competitive inhibition. In terms of biological role, catalyzes the ATP-dependent amination of UTP to CTP with either L-glutamine or ammonia as the source of nitrogen. Regulates intracellular CTP levels through interactions with the four ribonucleotide triphosphates. The polypeptide is CTP synthase (Chromobacterium violaceum (strain ATCC 12472 / DSM 30191 / JCM 1249 / CCUG 213 / NBRC 12614 / NCIMB 9131 / NCTC 9757 / MK)).